The following is a 295-amino-acid chain: Nucleotide-binding protein MCA0739 (295 aa).

8–15 serves as a coordination point for ATP; sequence GFSGSGKS. GTP is bound at residue 60–63; the sequence is DARN.

Belongs to the RapZ-like family.

In terms of biological role, displays ATPase and GTPase activities. The chain is Nucleotide-binding protein MCA0739 from Methylococcus capsulatus (strain ATCC 33009 / NCIMB 11132 / Bath).